We begin with the raw amino-acid sequence, 530 residues long: MATPSSIPAEPKRDVVNRIHRVTRGNRSLWYQMTVLQQPERARACGSGSKANSDRRPVDPPPVVELRIIEGPSVEEGKDITFDYNANFFLYASLEHARPLARGRVNTPAAGNPPILTGVPASGMAYLDRPTEAGYFIFPDLSVRHEGLYILTFSLFETTKEERDFDLEPADGDLPPGVDYRMEIKTDPFSVYSAKKFPGLMESTQLSKTVADQGCQVRIRRDVRMRKRESKPGAGNSNSGGNGFERREEDFGRRRTITPASEDPHSIRNRSHSNSSEQRTPYTDASRRPSMVDSYPPPPPPPSYEPAPSASRHLDFGDSSAAQYPTPRQYAHQPGLQITPGPPSGSYAPTAQSPYSKTDAPYGYVNRNIPPSCPSPAPSVKHDLYDRRQSTSSYVPPSPSVYSTEGHHRRDSRPSYPPTPVAAPRPRPMHSQTSLPALKIDQLVSPVSPLPPIEPQTGPAPELPPINVGGKRKHESVFAQSTRPLHNGQRQVDPHYGRSHRGYSPDHDQGWYSRADGQISSVQFNRYYDE.

In terms of domain architecture, Velvet spans N26 to R220. The Nuclear localization signal motif lies at E40 to C45. The tract at residues L206 to D516 is disordered. Over residues F244 to R253 the composition is skewed to basic and acidic residues. A compositionally biased stretch (pro residues) spans Y295–E305. Positions Y347 to S356 are enriched in polar residues. Residues V380–Q389 show a composition bias toward basic and acidic residues. The segment covering S390–T404 has biased composition (low complexity). Positions S415–P426 are enriched in pro residues. The PEST stretch occupies residues M429–A460. Polar residues predominate over residues F478–R490.

It belongs to the velvet family. VeA subfamily. In terms of assembly, component of the heterotrimeric velvet complex composed of LAE1, VEL1 and VEL2; VEL1 acting as a bridging protein between LAE1 and VEL2. Interacts with LAE1.

The protein localises to the nucleus. It is found in the cytoplasm. In terms of biological role, component of the velvet transcription factor complex that controls sexual/asexual developmental ratio in response to light, promoting sexual development in the darkness while stimulating asexual sporulation under illumination. The velvet complex hat acts as a global regulator for secondary metabolite gene expression. Controls positively the expression of the gibberellins, fumonisins and fusarin C gene clusters. Controls the expression of the fusaric acid gene cluster. Controls negatively the expression of the bikaverin gene cluster. Regulates the expression of laeA. Plays a crucial role in virulence. In Gibberella fujikuroi (strain CBS 195.34 / IMI 58289 / NRRL A-6831) (Bakanae and foot rot disease fungus), this protein is Developmental and secondary metabolism regulator VEL1.